We begin with the raw amino-acid sequence, 941 residues long: ATP-dependent 6-phosphofructokinase subunit beta (941 aa).

The segment at 2-558 (PDASLFNGTS…HMKNFISTNS (557 aa)) is N-terminal catalytic PFK domain 1. Residues Gly-191, 255-256 (RC), and 285-288 (GDGS) contribute to the ATP site. Asp-286 contributes to the Mg(2+) binding site. Residues 331–333 (SID), Arg-368, and 375–377 (MGR) contribute to the beta-D-fructose 6-phosphate site. Catalysis depends on Asp-333, which acts as the Proton acceptor. Residues Ile-395, 400–405 (KPASSR), and Gln-410 contribute to the ATP site. Beta-D-fructose 6-phosphate is bound by residues Glu-432, Arg-460, and 466 to 469 (HVQR). Residue 557 to 558 (NS) coordinates ATP. The interdomain linker stretch occupies residues 559 to 572 (ADHVPPSLPLEKRK). The C-terminal regulatory PFK domain 2 stretch occupies residues 573-941 (KIAIINVGAP…SDMLSGRTSL (369 aa)). Residues Arg-643, 701–705 (TISNN), Arg-739, 746–748 (QGG), Glu-806, Lys-832, 838–841 (HVQQ), and Arg-918 contribute to the beta-D-fructose 2,6-bisphosphate site.

The protein belongs to the phosphofructokinase type A (PFKA) family. ATP-dependent PFK group I subfamily. Eukaryotic two domain clade 'E' sub-subfamily. As to quaternary structure, heterododecamer of 4 alpha, 4 beta and 4 gamma chains. It depends on Mg(2+) as a cofactor.

The protein localises to the cytoplasm. It catalyses the reaction beta-D-fructose 6-phosphate + ATP = beta-D-fructose 1,6-bisphosphate + ADP + H(+). Its pathway is carbohydrate degradation; glycolysis; D-glyceraldehyde 3-phosphate and glycerone phosphate from D-glucose: step 3/4. Its activity is regulated as follows. Allosterically activated by ADP, AMP, or fructose 2,6-bisphosphate, and allosterically inhibited by ATP or citrate. Its function is as follows. Catalyzes the phosphorylation of D-fructose 6-phosphate to fructose 1,6-bisphosphate by ATP, the first committing step of glycolysis. The polypeptide is ATP-dependent 6-phosphofructokinase subunit beta (PFK2) (Komagataella pastoris (Yeast)).